A 207-amino-acid polypeptide reads, in one-letter code: Large ribosomal subunit protein uL4 (207 aa).

A disordered region spans residues 49–73 (AKKRGEVSGGGKKPWKQKGGGRARA).

The protein belongs to the universal ribosomal protein uL4 family. Part of the 50S ribosomal subunit.

Its function is as follows. One of the primary rRNA binding proteins, this protein initially binds near the 5'-end of the 23S rRNA. It is important during the early stages of 50S assembly. It makes multiple contacts with different domains of the 23S rRNA in the assembled 50S subunit and ribosome. Functionally, forms part of the polypeptide exit tunnel. The chain is Large ribosomal subunit protein uL4 from Helicobacter hepaticus (strain ATCC 51449 / 3B1).